The chain runs to 427 residues: Trigger factor (427 aa).

The PPIase FKBP-type domain occupies 163–248 (GDTVILDFEG…LHEIKTKEVP (86 aa)).

It belongs to the FKBP-type PPIase family. Tig subfamily.

It localises to the cytoplasm. The enzyme catalyses [protein]-peptidylproline (omega=180) = [protein]-peptidylproline (omega=0). Involved in protein export. Acts as a chaperone by maintaining the newly synthesized protein in an open conformation. Functions as a peptidyl-prolyl cis-trans isomerase. The protein is Trigger factor of Listeria monocytogenes serotype 4a (strain HCC23).